We begin with the raw amino-acid sequence, 478 residues long: MKHIVQQIHFIGIGGTGMSGIAEVLLNLGYQVSGSDLVEGAATKRLKELGAVIHIGHDPKNVGTAEAVVISTAVAGNNPEVLAARAAKIPVIQRAVMLGELMRLKQGIAIAGTHGKTTTTSLVASVLAEGDLDPTFVIGGKLNSAGANARLGRGDFIVVEADESDASFLQLFPAMEVVTNIDADHMDTYQHDMARLKQAFVQFIQRMPFYGVAVLCIDDANVRDIIPFVSQPILRYGLSEDADIRASNVRADGTRMHFTVERRTVRRHGNKPGPLNVTLNLPGLHNVRNALAAIGIATELGVGDQAIIKALSEFSGVGRRFQRYGDIPLASGGKFTLIDDYGHHPVEMAATLAAARGAYPDRRLVLAFQPHRFTRTRDCFGEFVQVLKNFDALVLTEVYPAGEAKIPGADGKSLMKAALVDDKTSKALLNSAAVAFASSVAEMPEKLGQVLKDGDVLITMGAGSISALPHTLSEAKHV.

112 to 118 (GTHGKTT) provides a ligand contact to ATP.

This sequence belongs to the MurCDEF family.

It is found in the cytoplasm. It catalyses the reaction UDP-N-acetyl-alpha-D-muramate + L-alanine + ATP = UDP-N-acetyl-alpha-D-muramoyl-L-alanine + ADP + phosphate + H(+). It participates in cell wall biogenesis; peptidoglycan biosynthesis. Its function is as follows. Cell wall formation. In Polynucleobacter asymbioticus (strain DSM 18221 / CIP 109841 / QLW-P1DMWA-1) (Polynucleobacter necessarius subsp. asymbioticus), this protein is UDP-N-acetylmuramate--L-alanine ligase.